Here is a 154-residue protein sequence, read N- to C-terminus: Malate dehydrogenase (154 aa).

Positions 3 and 9 each coordinate substrate. Residues N16 and 39–41 (ITN) each bind NAD(+). Substrate-binding residues include N41 and R75. The active-site Proton acceptor is the H99. M149 is a binding site for NAD(+).

It belongs to the LDH/MDH superfamily. MDH type 1 family. As to quaternary structure, homodimer.

It carries out the reaction (S)-malate + NAD(+) = oxaloacetate + NADH + H(+). In terms of biological role, catalyzes the reversible oxidation of malate to oxaloacetate. The protein is Malate dehydrogenase (mdh) of Pectobacterium carotovorum subsp. carotovorum (Erwinia carotovora subsp. carotovora).